Reading from the N-terminus, the 257-residue chain is Nickel import system ATP-binding protein NikD (257 aa).

Positions 4–245 (IDIQNLTIKN…HLHPYTERLI (242 aa)) constitute an ABC transporter domain. ATP is bound at residue 37–44 (GESGAGKS).

Belongs to the ABC transporter superfamily. As to quaternary structure, the complex is composed of two ATP-binding proteins (NikD and NikE), two transmembrane proteins (NikB and NikC) and a solute-binding protein (NikA).

The protein resides in the cell membrane. It catalyses the reaction Ni(2+)(out) + ATP + H2O = Ni(2+)(in) + ADP + phosphate + H(+). Its function is as follows. Part of the ABC transporter complex NikABCDE (Opp2) involved in nickel import. Probably responsible for energy coupling to the transport system. The polypeptide is Nickel import system ATP-binding protein NikD (Staphylococcus aureus (strain MW2)).